Here is a 420-residue protein sequence, read N- to C-terminus: Putative FBD-associated F-box protein At1g78730 (420 aa).

Residues 21–71 (LDWLRKLPDSLLCQVFLNLPTKDVVKTSVLSSTWGNIWRSVPGLDLGYGDF) form the F-box domain. The FBD domain occupies 341-390 (ISILPGPQCNLPALEFVDILKPMVEKETELKLMSYFLEKSTILKKLTLRL).

The protein is Putative FBD-associated F-box protein At1g78730 of Arabidopsis thaliana (Mouse-ear cress).